The primary structure comprises 174 residues: Endoribonuclease YbeY (174 aa).

Zn(2+) is bound by residues histidine 129, histidine 133, and histidine 139.

It belongs to the endoribonuclease YbeY family. Requires Zn(2+) as cofactor.

It is found in the cytoplasm. In terms of biological role, single strand-specific metallo-endoribonuclease involved in late-stage 70S ribosome quality control and in maturation of the 3' terminus of the 16S rRNA. In Lactobacillus delbrueckii subsp. bulgaricus (strain ATCC BAA-365 / Lb-18), this protein is Endoribonuclease YbeY.